Here is an 87-residue protein sequence, read N- to C-terminus: Putative defensin-like protein 317 (87 aa).

An N-terminal signal peptide occupies residues 1 to 24; it reads MKSFLVAFLIVLVFFCVEMKIGNG. 3 disulfides stabilise this stretch: cysteine 38–cysteine 71, cysteine 47–cysteine 80, and cysteine 56–cysteine 82.

The protein belongs to the DEFL family.

It is found in the secreted. The sequence is that of Putative defensin-like protein 317 from Arabidopsis thaliana (Mouse-ear cress).